Consider the following 145-residue polypeptide: D-aminoacyl-tRNA deacylase (145 aa).

Residues 137-138 carry the Gly-cisPro motif, important for rejection of L-amino acids motif; it reads GP.

This sequence belongs to the DTD family. Homodimer.

The protein localises to the cytoplasm. The enzyme catalyses glycyl-tRNA(Ala) + H2O = tRNA(Ala) + glycine + H(+). It carries out the reaction a D-aminoacyl-tRNA + H2O = a tRNA + a D-alpha-amino acid + H(+). Functionally, an aminoacyl-tRNA editing enzyme that deacylates mischarged D-aminoacyl-tRNAs. Also deacylates mischarged glycyl-tRNA(Ala), protecting cells against glycine mischarging by AlaRS. Acts via tRNA-based rather than protein-based catalysis; rejects L-amino acids rather than detecting D-amino acids in the active site. By recycling D-aminoacyl-tRNA to D-amino acids and free tRNA molecules, this enzyme counteracts the toxicity associated with the formation of D-aminoacyl-tRNA entities in vivo and helps enforce protein L-homochirality. The polypeptide is D-aminoacyl-tRNA deacylase (Shewanella amazonensis (strain ATCC BAA-1098 / SB2B)).